The following is a 216-amino-acid chain: Probable inactive E3 ubiquitin-protein ligase SINAT6 (216 aa).

The SIAH-type zinc-finger motif lies at 5–74; the sequence is INDLQVESRV…LLLHLRNDHN (70 aa).

This sequence belongs to the SINA (Seven in absentia) family. Homodimer. Interacts with SINAT1, SINAT2, SINAT3, SINAT4 and SINAT5. Interacts with ATG6 and TRAF1A. Expressed in roots, rosette leaves, cauline leaves, guard cells and flowers.

It localises to the cytoplasm. It is found in the nucleus. Its function is as follows. Probable inactive E3 ubiquitin-protein ligase that plays a role in regulation of autophagy. Upon starvation, involved in maintaining ATG6 homeostasis by competitively associating with ATG6, a component of the autophagosome complex. Acts as a positive regulator of drought stress response. Functions as a positive regulator of abscisic acid-mediated stomatal closure. This chain is Probable inactive E3 ubiquitin-protein ligase SINAT6, found in Arabidopsis thaliana (Mouse-ear cress).